The sequence spans 782 residues: E3 ubiquitin-protein ligase SopA (782 aa).

The tract at residues valine 137 to alanine 171 is disordered. Residues proline 157–alanine 171 show a composition bias toward low complexity. Cysteine 753 serves as the catalytic Glycyl thioester intermediate.

The protein belongs to the SopA E3 ligase family. Ubiquitinated in the presence of host E1 ubiquitin-activating enzyme, E2 ubiquitin-conjugating enzyme and ubiquitin.

It localises to the secreted. The protein resides in the host cell. The catalysed reaction is S-ubiquitinyl-[E2 ubiquitin-conjugating enzyme]-L-cysteine + [acceptor protein]-L-lysine = [E2 ubiquitin-conjugating enzyme]-L-cysteine + N(6)-ubiquitinyl-[acceptor protein]-L-lysine.. In terms of biological role, effector proteins function to alter host cell physiology and promote bacterial survival in host tissues. This protein is an E3 ubiquitin ligase that interferes with host's ubiquitination pathway. In Salmonella newport (strain SL254), this protein is E3 ubiquitin-protein ligase SopA (sopA).